Reading from the N-terminus, the 142-residue chain is Large ribosomal subunit protein uL13 (142 aa).

The protein belongs to the universal ribosomal protein uL13 family. As to quaternary structure, part of the 50S ribosomal subunit.

Functionally, this protein is one of the early assembly proteins of the 50S ribosomal subunit, although it is not seen to bind rRNA by itself. It is important during the early stages of 50S assembly. This chain is Large ribosomal subunit protein uL13, found in Idiomarina loihiensis (strain ATCC BAA-735 / DSM 15497 / L2-TR).